Reading from the N-terminus, the 338-residue chain is Ketol-acid reductoisomerase (NADP(+)) (338 aa).

Positions 1-181 constitute a KARI N-terminal Rossmann domain; it reads MKVFYDKDAD…GGGRAGIIET (181 aa). NADP(+) contacts are provided by residues 24-27, Arg47, and Ser52; that span reads YGSQ. Residue His107 is part of the active site. NADP(+) is bound at residue Gly133. The 146-residue stretch at 182 to 327 folds into the KARI C-terminal knotted domain; sequence NFREETETDL…EKLRAMMPWI (146 aa). 4 residues coordinate Mg(2+): Asp190, Glu194, Glu226, and Glu230. Substrate is bound at residue Ser251.

Belongs to the ketol-acid reductoisomerase family. Requires Mg(2+) as cofactor.

The enzyme catalyses (2R)-2,3-dihydroxy-3-methylbutanoate + NADP(+) = (2S)-2-acetolactate + NADPH + H(+). The catalysed reaction is (2R,3R)-2,3-dihydroxy-3-methylpentanoate + NADP(+) = (S)-2-ethyl-2-hydroxy-3-oxobutanoate + NADPH + H(+). Its pathway is amino-acid biosynthesis; L-isoleucine biosynthesis; L-isoleucine from 2-oxobutanoate: step 2/4. It participates in amino-acid biosynthesis; L-valine biosynthesis; L-valine from pyruvate: step 2/4. In terms of biological role, involved in the biosynthesis of branched-chain amino acids (BCAA). Catalyzes an alkyl-migration followed by a ketol-acid reduction of (S)-2-acetolactate (S2AL) to yield (R)-2,3-dihydroxy-isovalerate. In the isomerase reaction, S2AL is rearranged via a Mg-dependent methyl migration to produce 3-hydroxy-3-methyl-2-ketobutyrate (HMKB). In the reductase reaction, this 2-ketoacid undergoes a metal-dependent reduction by NADPH to yield (R)-2,3-dihydroxy-isovalerate. In Cupriavidus taiwanensis (strain DSM 17343 / BCRC 17206 / CCUG 44338 / CIP 107171 / LMG 19424 / R1) (Ralstonia taiwanensis (strain LMG 19424)), this protein is Ketol-acid reductoisomerase (NADP(+)).